Here is an 84-residue protein sequence, read N- to C-terminus: Cell division topological specificity factor (84 aa).

This sequence belongs to the MinE family.

Functionally, prevents the cell division inhibition by proteins MinC and MinD at internal division sites while permitting inhibition at polar sites. This ensures cell division at the proper site by restricting the formation of a division septum at the midpoint of the long axis of the cell. This Pseudomonas putida (strain ATCC 700007 / DSM 6899 / JCM 31910 / BCRC 17059 / LMG 24140 / F1) protein is Cell division topological specificity factor.